The sequence spans 311 residues: Ornithine carbamoyltransferase (311 aa).

Residues 52–55 (STRT), glutamine 79, arginine 103, and 129–132 (HPVQ) contribute to the carbamoyl phosphate site. L-ornithine-binding positions include asparagine 167, aspartate 226, and 230 to 231 (SM). Residues 266 to 267 (CL) and arginine 294 contribute to the carbamoyl phosphate site.

Belongs to the aspartate/ornithine carbamoyltransferase superfamily. OTCase family.

It is found in the cytoplasm. It catalyses the reaction carbamoyl phosphate + L-ornithine = L-citrulline + phosphate + H(+). It functions in the pathway amino-acid biosynthesis; L-arginine biosynthesis; L-arginine from L-ornithine and carbamoyl phosphate: step 1/3. Reversibly catalyzes the transfer of the carbamoyl group from carbamoyl phosphate (CP) to the N(epsilon) atom of ornithine (ORN) to produce L-citrulline. This is Ornithine carbamoyltransferase from Sorangium cellulosum (strain So ce56) (Polyangium cellulosum (strain So ce56)).